A 217-amino-acid polypeptide reads, in one-letter code: MLO-like protein (217 aa).

3 helical membrane passes run 35–55, 59–79, and 119–139; these read FKVV…FLLS, GWVA…VVGT, and LVLF…AFFI.

The protein belongs to the MLO family.

The protein resides in the membrane. In terms of biological role, may be involved in modulation of pathogen defense and leaf cell death. The sequence is that of MLO-like protein from Linum usitatissimum (Flax).